The sequence spans 495 residues: Aspartyl/glutamyl-tRNA(Asn/Gln) amidotransferase subunit B (495 aa).

This sequence belongs to the GatB/GatE family. GatB subfamily. As to quaternary structure, heterotrimer of A, B and C subunits.

The catalysed reaction is L-glutamyl-tRNA(Gln) + L-glutamine + ATP + H2O = L-glutaminyl-tRNA(Gln) + L-glutamate + ADP + phosphate + H(+). The enzyme catalyses L-aspartyl-tRNA(Asn) + L-glutamine + ATP + H2O = L-asparaginyl-tRNA(Asn) + L-glutamate + ADP + phosphate + 2 H(+). In terms of biological role, allows the formation of correctly charged Asn-tRNA(Asn) or Gln-tRNA(Gln) through the transamidation of misacylated Asp-tRNA(Asn) or Glu-tRNA(Gln) in organisms which lack either or both of asparaginyl-tRNA or glutaminyl-tRNA synthetases. The reaction takes place in the presence of glutamine and ATP through an activated phospho-Asp-tRNA(Asn) or phospho-Glu-tRNA(Gln). This chain is Aspartyl/glutamyl-tRNA(Asn/Gln) amidotransferase subunit B, found in Acinetobacter baylyi (strain ATCC 33305 / BD413 / ADP1).